A 146-amino-acid polypeptide reads, in one-letter code: Cytochrome c-type biogenesis protein CcmE (146 aa).

Topologically, residues 1–7 (MQAKHQR) are cytoplasmic. Residues 8-28 (LILGIIALAAVIAAGFLALVA) form a helical; Signal-anchor for type II membrane protein membrane-spanning segment. Over 29–146 (FKKQAAYFFT…AATQTTLQEK (118 aa)) the chain is Periplasmic. Heme-binding residues include His-123 and Tyr-127.

It belongs to the CcmE/CycJ family.

It localises to the cell inner membrane. Functionally, heme chaperone required for the biogenesis of c-type cytochromes. Transiently binds heme delivered by CcmC and transfers the heme to apo-cytochromes in a process facilitated by CcmF and CcmH. In Zymomonas mobilis subsp. mobilis (strain ATCC 31821 / ZM4 / CP4), this protein is Cytochrome c-type biogenesis protein CcmE.